Consider the following 566-residue polypeptide: 2-isopropylmalate synthase (566 aa).

The 275-residue stretch at 32–306 (PLWCAVDLRD…DPQIDFSNID (275 aa)) folds into the Pyruvate carboxyltransferase domain. Mg(2+) contacts are provided by Asp41, His245, His247, and Asn281. The segment at 451–566 (PVRPLERIKQ…VVSAINRASR (116 aa)) is regulatory domain.

It belongs to the alpha-IPM synthase/homocitrate synthase family. LeuA type 2 subfamily. As to quaternary structure, homodimer. Requires Mg(2+) as cofactor.

The protein localises to the cytoplasm. It catalyses the reaction 3-methyl-2-oxobutanoate + acetyl-CoA + H2O = (2S)-2-isopropylmalate + CoA + H(+). It functions in the pathway amino-acid biosynthesis; L-leucine biosynthesis; L-leucine from 3-methyl-2-oxobutanoate: step 1/4. In terms of biological role, catalyzes the condensation of the acetyl group of acetyl-CoA with 3-methyl-2-oxobutanoate (2-ketoisovalerate) to form 3-carboxy-3-hydroxy-4-methylpentanoate (2-isopropylmalate). The sequence is that of 2-isopropylmalate synthase from Mycobacterium ulcerans (strain Agy99).